A 623-amino-acid chain; its full sequence is uncharacterized protein (623 aa).

Residues Thr-28 to Gln-171 enclose the GAF domain. The region spanning Gly-212 to Ala-345 is the GGDEF domain. One can recognise an EAL domain in the interval Arg-354–Arg-609.

This is an uncharacterized protein from Mycobacterium tuberculosis (strain CDC 1551 / Oshkosh).